The following is a 320-amino-acid chain: Lipoyl synthase (320 aa).

[4Fe-4S] cluster is bound by residues C67, C72, C78, C93, C97, C100, and S307. A Radical SAM core domain is found at 79–296 (FNHGTATFMI…RDKANEMGFE (218 aa)).

It belongs to the radical SAM superfamily. Lipoyl synthase family. The cofactor is [4Fe-4S] cluster.

It localises to the cytoplasm. It catalyses the reaction [[Fe-S] cluster scaffold protein carrying a second [4Fe-4S](2+) cluster] + N(6)-octanoyl-L-lysyl-[protein] + 2 oxidized [2Fe-2S]-[ferredoxin] + 2 S-adenosyl-L-methionine + 4 H(+) = [[Fe-S] cluster scaffold protein] + N(6)-[(R)-dihydrolipoyl]-L-lysyl-[protein] + 4 Fe(3+) + 2 hydrogen sulfide + 2 5'-deoxyadenosine + 2 L-methionine + 2 reduced [2Fe-2S]-[ferredoxin]. Its pathway is protein modification; protein lipoylation via endogenous pathway; protein N(6)-(lipoyl)lysine from octanoyl-[acyl-carrier-protein]: step 2/2. Catalyzes the radical-mediated insertion of two sulfur atoms into the C-6 and C-8 positions of the octanoyl moiety bound to the lipoyl domains of lipoate-dependent enzymes, thereby converting the octanoylated domains into lipoylated derivatives. The polypeptide is Lipoyl synthase (Haemophilus influenzae (strain 86-028NP)).